Consider the following 268-residue polypeptide: Indole-3-glycerol phosphate synthase 2 (268 aa).

Belongs to the TrpC family.

It carries out the reaction 1-(2-carboxyphenylamino)-1-deoxy-D-ribulose 5-phosphate + H(+) = (1S,2R)-1-C-(indol-3-yl)glycerol 3-phosphate + CO2 + H2O. It functions in the pathway amino-acid biosynthesis; L-tryptophan biosynthesis; L-tryptophan from chorismate: step 4/5. In Ralstonia nicotianae (strain ATCC BAA-1114 / GMI1000) (Ralstonia solanacearum), this protein is Indole-3-glycerol phosphate synthase 2 (trpC2).